A 501-amino-acid polypeptide reads, in one-letter code: Cytochrome P450 71B25 (501 aa).

Residues 1–21 traverse the membrane as a helical segment; that stretch reads MAILQSFLLLLSLPFLFTLIY. Cys445 contacts heme.

This sequence belongs to the cytochrome P450 family. Heme is required as a cofactor.

It localises to the membrane. This chain is Cytochrome P450 71B25 (CYP71B25), found in Arabidopsis thaliana (Mouse-ear cress).